The chain runs to 420 residues: Glucose-1-phosphate adenylyltransferase (420 aa).

Alpha-D-glucose 1-phosphate is bound by residues Tyr107, Gly172, 187–188, and Ser205; that span reads EK.

Belongs to the bacterial/plant glucose-1-phosphate adenylyltransferase family. Homotetramer.

It catalyses the reaction alpha-D-glucose 1-phosphate + ATP + H(+) = ADP-alpha-D-glucose + diphosphate. Its pathway is glycan biosynthesis; glycogen biosynthesis. In terms of biological role, involved in the biosynthesis of ADP-glucose, a building block required for the elongation reactions to produce glycogen. Catalyzes the reaction between ATP and alpha-D-glucose 1-phosphate (G1P) to produce pyrophosphate and ADP-Glc. The protein is Glucose-1-phosphate adenylyltransferase of Rhizobium etli (strain ATCC 51251 / DSM 11541 / JCM 21823 / NBRC 15573 / CFN 42).